We begin with the raw amino-acid sequence, 348 residues long: Spore development regulator vosA (348 aa).

One can recognise a Velvet domain in the interval 46–244 (ALSPSSCFLS…SDQGVRLRLR (199 aa)). Residues 250-294 (MMSNKRSISGSGDLTSDQSQQQQQQQPLAKKRREDSVESANPSSL) form a disordered region. Positions 253-266 (NKRSISGSGDLTSD) are enriched in polar residues. Positions 274-280 (QQPLAKK) match the Nuclear localization signal motif.

Belongs to the velvet family. VosA subfamily. Forms a heterodimeric complex with VEL2; the formation of the VEL2-VOS1 complex is light-dependent.

It localises to the nucleus. In terms of biological role, component of the velB-VosA heterodimeric complex that plays a dual role in activating genes associated with spore maturation and repressing certain development-associated genes. The complex binds DNA through the DNA-binding domain of vosA that recognizes an 11-nucleotide consensus sequence 5'-CTGGCCGCGGC-3' consisting of two motifs in the promoters of key developmental regulatory genes. Regulates spore viability, trehalose accumulation, and tolerance to thermal and oxidative as well as ion stresses. Positively regulates conidial pigmentation and pathogenicity on barley. The protein is Spore development regulator vosA of Cochliobolus sativus (strain ND90Pr / ATCC 201652) (Common root rot and spot blotch fungus).